An 838-amino-acid polypeptide reads, in one-letter code: Serine/threonine-protein phosphatase 4 regulatory subunit 3 (838 aa).

Disordered stretches follow at residues 452–482 and 745–838; these read NNCN…SPSR and AINK…SESS. A compositionally biased stretch (polar residues) spans 747 to 761; that stretch reads NKQQDNNGERNTTTG. Residues 783-792 show a composition bias toward acidic residues; sequence SDGENNENNE.

In terms of assembly, regulatory subunit 3 (R3) of the histone H2A phosphatase complex (HTP-C) consisting of PPH3, PSY2 and PSY4.

It localises to the nucleus. Its function is as follows. Core regulatory subunit of the histone H2A phosphatase complex, which dephosphorylates H2AS128ph (gamma-H2A) that has been displaced from sites of DNA lesions in the double-stranded DNA break repair process. Dephosphorylation is necessary for efficient recovery from the DNA damage checkpoint. This is Serine/threonine-protein phosphatase 4 regulatory subunit 3 (PSY2) from Eremothecium gossypii (strain ATCC 10895 / CBS 109.51 / FGSC 9923 / NRRL Y-1056) (Yeast).